The chain runs to 436 residues: UPF0597 protein YhaM (436 aa).

This sequence belongs to the UPF0597 family.

The polypeptide is UPF0597 protein YhaM (Shigella dysenteriae serotype 1 (strain Sd197)).